The chain runs to 128 residues: Glycine cleavage system H protein (128 aa).

The Lipoyl-binding domain occupies 22 to 104; it reads TVLVGITDYA…YGEGWIFRLK (83 aa). Residue lysine 63 is modified to N6-lipoyllysine.

Belongs to the GcvH family. The glycine cleavage system is composed of four proteins: P, T, L and H. Requires (R)-lipoate as cofactor.

Functionally, the glycine cleavage system catalyzes the degradation of glycine. The H protein shuttles the methylamine group of glycine from the P protein to the T protein. The sequence is that of Glycine cleavage system H protein from Thermus thermophilus (strain ATCC BAA-163 / DSM 7039 / HB27).